A 429-amino-acid chain; its full sequence is Gamma-glutamyl phosphate reductase (429 aa).

The protein belongs to the gamma-glutamyl phosphate reductase family.

It is found in the cytoplasm. The enzyme catalyses L-glutamate 5-semialdehyde + phosphate + NADP(+) = L-glutamyl 5-phosphate + NADPH + H(+). The protein operates within amino-acid biosynthesis; L-proline biosynthesis; L-glutamate 5-semialdehyde from L-glutamate: step 2/2. Its function is as follows. Catalyzes the NADPH-dependent reduction of L-glutamate 5-phosphate into L-glutamate 5-semialdehyde and phosphate. The product spontaneously undergoes cyclization to form 1-pyrroline-5-carboxylate. This is Gamma-glutamyl phosphate reductase from Rhizorhabdus wittichii (strain DSM 6014 / CCUG 31198 / JCM 15750 / NBRC 105917 / EY 4224 / RW1) (Sphingomonas wittichii).